A 155-amino-acid chain; its full sequence is S-ribosylhomocysteine lyase (155 aa).

Residues histidine 58, histidine 62, and cysteine 125 each coordinate Fe cation.

This sequence belongs to the LuxS family. In terms of assembly, homodimer. Requires Fe cation as cofactor.

The enzyme catalyses S-(5-deoxy-D-ribos-5-yl)-L-homocysteine = (S)-4,5-dihydroxypentane-2,3-dione + L-homocysteine. Its function is as follows. Involved in the synthesis of autoinducer 2 (AI-2) which is secreted by bacteria and is used to communicate both the cell density and the metabolic potential of the environment. The regulation of gene expression in response to changes in cell density is called quorum sensing. Catalyzes the transformation of S-ribosylhomocysteine (RHC) to homocysteine (HC) and 4,5-dihydroxy-2,3-pentadione (DPD). In Helicobacter pylori (strain Shi470), this protein is S-ribosylhomocysteine lyase.